Reading from the N-terminus, the 497-residue chain is CRISPR-associated endodeoxyribonuclease Cas12f1 (497 aa).

Positions 29-122 are recognition domain (REC); that stretch reads RKDLSTMSRF…PTYKITTAPI (94 aa). The segment at 123–214 is wedge domain (WED); it reads RLQNNIYKLI…YCIIPYTFPT (92 aa). A linker region spans residues 215–223; it reads HETVLDPDK. The segment at 224–374 is ruvC-I; sequence VMGVDLGVAK…VAINPQYTSQ (151 aa). Catalysis depends on residues D228 and E327. The segment at 375–432 is target nucleic acid-binding (TNB); it reads RCSMCGYIEKTNRSSQAVFECKQCGYGSRTICINCRHVQVSGDVCEECGGIVKKENVN. Residues C376, C379, C395, and C398 each contribute to the Zn(2+) site. Residues 433 to 453 are ruvC-II; it reads ADYNAAKNISTPYIDQIIMEK. D434 is an active-site residue.

This sequence belongs to the CRISPR-associated endonuclease Cas12f family. An asymmetric homodimer. Guide RNA is probably required for dimerization. Mg(2+) serves as cofactor. Zn(2+) is required as a cofactor.

In terms of biological role, CRISPR (clustered regularly interspaced short palindromic repeat), is an adaptive immune system that provides protection against mobile genetic elements (viruses, transposable elements and conjugative plasmids). CRISPR clusters contain sequences complementary to antecedent mobile elements and target invading nucleic acids. CRISPR clusters are transcribed and processed into CRISPR RNA (crRNA), which requires a trans-encoded small RNA (tracrRNA), but not this protein. Recognizes a short motif in the CRISPR repeat sequences (the 5' PAM or protospacer adjacent motif, TTC in this organism) to help distinguish self versus nonself, as targets within the CRISPR locus do not have PAMs. Has dsDNA endonuclease activity upon expression in E.coli of this protein, a mini CRISPR array and the probable tracrRNA. Plasmid cleavage is centered around positions 24 base pairs 3' of PAM. The mini system protects E.coli against transformation by foreign plasmids. The chain is CRISPR-associated endodeoxyribonuclease Cas12f1 from Syntrophomonas palmitatica (strain DSM 18709 / JCM 14374 / NBRC 102128 / MPA).